The sequence spans 213 residues: MKSLQALFGGTFDPVHYGHLKPVETLANLIGLSRVIIMPNNVPPHRPQPEASSAQRKYMLELAIADKPLFTLGERELQRNAPSYTAQTLKAWREEQGPEAPLAFIIGQDSLLNFPTWHDYDTILDNTHLIVCRRPGYPLEMTQAQHQQWLEQHLTHTPDDLHQLPAGKIYLAETPWLNISATLIRERLEKGESCDDLLPENVLNYINQQGLYR.

It belongs to the NadD family.

The enzyme catalyses nicotinate beta-D-ribonucleotide + ATP + H(+) = deamido-NAD(+) + diphosphate. It participates in cofactor biosynthesis; NAD(+) biosynthesis; deamido-NAD(+) from nicotinate D-ribonucleotide: step 1/1. Its function is as follows. Catalyzes the reversible adenylation of nicotinate mononucleotide (NaMN) to nicotinic acid adenine dinucleotide (NaAD). The protein is Nicotinate-nucleotide adenylyltransferase of Salmonella typhi.